The sequence spans 420 residues: Phosphoglycerate kinase, cytosolic (420 aa).

Residues V23, D24, F25, N26, R39, S61, H62, G64, R65, R135, H171, and R172 each coordinate (2R)-3-phosphoglycerate. G217 contributes to the ADP binding site. G217 is a CDP binding site. K219 serves as a coordination point for (2R)-3-phosphoglycerate. An AMP-binding site is contributed by K219. D222 is a binding site for CDP. D222 provides a ligand contact to Mg(2+). ADP-binding residues include K223 and G241. K223 contacts AMP. An ATP-binding site is contributed by K223. G241 contacts CDP. Residues A242 and A314 each contribute to the AMP site. The ATP site is built by A242 and A314. ADP contacts are provided by A314 and N338. The CDP site is built by G339 and F344. ADP contacts are provided by F344, E345, D377, and S378. E345 contributes to the AMP binding site. 3 residues coordinate ATP: E345, D377, and S378. D377 is a binding site for Mg(2+).

This sequence belongs to the phosphoglycerate kinase family. As to quaternary structure, monomer. The cofactor is Mg(2+).

Its subcellular location is the cytoplasm. The enzyme catalyses (2R)-3-phosphoglycerate + ATP = (2R)-3-phospho-glyceroyl phosphate + ADP. The protein operates within carbohydrate degradation; glycolysis; pyruvate from D-glyceraldehyde 3-phosphate: step 2/5. This is Phosphoglycerate kinase, cytosolic (C1PGK) from Trypanosoma congolense.